The sequence spans 235 residues: Purine nucleoside phosphorylase DeoD-type (235 aa).

His4 is a binding site for a purine D-ribonucleoside. Residues Gly20, Arg24, Arg43, and 87-90 (RVGT) contribute to the phosphate site. Residues 178-180 (EME) and 202-203 (SD) each bind a purine D-ribonucleoside. The active-site Proton donor is the Asp203.

It belongs to the PNP/UDP phosphorylase family. Homohexamer; trimer of homodimers.

The catalysed reaction is a purine D-ribonucleoside + phosphate = a purine nucleobase + alpha-D-ribose 1-phosphate. It carries out the reaction a purine 2'-deoxy-D-ribonucleoside + phosphate = a purine nucleobase + 2-deoxy-alpha-D-ribose 1-phosphate. In terms of biological role, catalyzes the reversible phosphorolytic breakdown of the N-glycosidic bond in the beta-(deoxy)ribonucleoside molecules, with the formation of the corresponding free purine bases and pentose-1-phosphate. The chain is Purine nucleoside phosphorylase DeoD-type from Geobacillus sp. (strain WCH70).